The chain runs to 154 residues: Ribonuclease H (154 aa).

An RNase H type-1 domain is found at 1 to 142 (MLKHIDLYTD…CDELARDAAS (142 aa)). The Mg(2+) site is built by Asp-10, Glu-48, Asp-70, and Asp-134. Basic and acidic residues predominate over residues 126-147 (GHPENERCDELARDAASGKELA). The interval 126-154 (GHPENERCDELARDAASGKELAEDTGYQP) is disordered.

This sequence belongs to the RNase H family. Monomer. It depends on Mg(2+) as a cofactor.

The protein localises to the cytoplasm. The enzyme catalyses Endonucleolytic cleavage to 5'-phosphomonoester.. In terms of biological role, endonuclease that specifically degrades the RNA of RNA-DNA hybrids. In Aeromonas salmonicida (strain A449), this protein is Ribonuclease H.